Here is a 312-residue protein sequence, read N- to C-terminus: Putative endonuclease 4 (312 aa).

Zn(2+)-binding residues include histidine 84, histidine 127, glutamate 166, aspartate 202, histidine 205, histidine 239, aspartate 252, histidine 254, and glutamate 284.

This sequence belongs to the AP endonuclease 2 family. Zn(2+) is required as a cofactor.

It catalyses the reaction Endonucleolytic cleavage to 5'-phosphooligonucleotide end-products.. In terms of biological role, endonuclease IV plays a role in DNA repair. It cleaves phosphodiester bonds at apurinic or apyrimidinic sites (AP sites) to produce new 5'-ends that are base-free deoxyribose 5-phosphate residues. This Acanthamoeba polyphaga (Amoeba) protein is Putative endonuclease 4.